Here is a 383-residue protein sequence, read N- to C-terminus: Putative glutamate--cysteine ligase 2-1 (383 aa).

The protein belongs to the glutamate--cysteine ligase type 2 family. YbdK subfamily.

The catalysed reaction is L-cysteine + L-glutamate + ATP = gamma-L-glutamyl-L-cysteine + ADP + phosphate + H(+). ATP-dependent carboxylate-amine ligase which exhibits weak glutamate--cysteine ligase activity. This Arthrobacter sp. (strain FB24) protein is Putative glutamate--cysteine ligase 2-1.